A 206-amino-acid chain; its full sequence is MDLVIKTLDGHEAGKLKVSESIFDLVPREDILQRVVRWQLARRQQGTHQSQGRSDVSRTGAKMFKQKGTGRARHSSARAPQFRGGGKAHGPVFRSHAHDLPKKIRALGLRLALSAKLKAKDLIVVDELAVKDAKTKKLVSHFSKLGFNNALLIGGQEIDINFFRAASNIPNIDVLPIQGINVYDILRRSKLVLSKAAVEALEERFR.

Over residues 42–54 the composition is skewed to polar residues; the sequence is RRQQGTHQSQGRS. A disordered region spans residues 42–94; sequence RRQQGTHQSQGRSDVSRTGAKMFKQKGTGRARHSSARAPQFRGGGKAHGPVFR. Positions 64–76 are enriched in basic residues; that stretch reads FKQKGTGRARHSS.

This sequence belongs to the universal ribosomal protein uL4 family. Part of the 50S ribosomal subunit.

In terms of biological role, one of the primary rRNA binding proteins, this protein initially binds near the 5'-end of the 23S rRNA. It is important during the early stages of 50S assembly. It makes multiple contacts with different domains of the 23S rRNA in the assembled 50S subunit and ribosome. Functionally, forms part of the polypeptide exit tunnel. The sequence is that of Large ribosomal subunit protein uL4 from Bartonella tribocorum (strain CIP 105476 / IBS 506).